Consider the following 161-residue polypeptide: uncharacterized protein (161 aa).

The N-terminal stretch at 1–35 (MVMAMGFDTVVAAIMATAIIVAVAYTFLAGSTSIA) is a signal peptide.

This is an uncharacterized protein from Archaeoglobus fulgidus (strain ATCC 49558 / DSM 4304 / JCM 9628 / NBRC 100126 / VC-16).